A 965-amino-acid chain; its full sequence is Glycine dehydrogenase (decarboxylating) 1 (965 aa).

N6-(pyridoxal phosphate)lysine is present on Lys713.

Belongs to the GcvP family. The glycine cleavage system is composed of four proteins: P, T, L and H. It depends on pyridoxal 5'-phosphate as a cofactor.

It carries out the reaction N(6)-[(R)-lipoyl]-L-lysyl-[glycine-cleavage complex H protein] + glycine + H(+) = N(6)-[(R)-S(8)-aminomethyldihydrolipoyl]-L-lysyl-[glycine-cleavage complex H protein] + CO2. Functionally, the glycine cleavage system catalyzes the degradation of glycine. The P protein binds the alpha-amino group of glycine through its pyridoxal phosphate cofactor; CO(2) is released and the remaining methylamine moiety is then transferred to the lipoamide cofactor of the H protein. The sequence is that of Glycine dehydrogenase (decarboxylating) 1 from Colwellia psychrerythraea (strain 34H / ATCC BAA-681) (Vibrio psychroerythus).